Consider the following 210-residue polypeptide: Natriuretic peptide BM026 (210 aa).

An N-terminal signal peptide occupies residues 1–26 (MVGPSRLAGGGLLLLLLALLPVALDG). The interval 83–99 (CFGHKIDRISHSSGMGC) is natriuretic peptide domain 1. Cys-83 and Cys-99 are joined by a disulfide. A compositionally biased stretch (basic and acidic residues) spans 122–134 (ESKKSRAARDRMV). Residues 122 to 210 (ESKKSRAARD…QFNSKSSQVA (89 aa)) are disordered. Gly residues predominate over residues 140-150 (AGGGGGGGGGD). The span at 156-176 (ELAKKDQHNNCFGRRIDRISH) shows a compositional bias: basic and acidic residues. A natriuretic peptide domain 2 region spans residues 166–182 (CFGRRIDRISHSTDLGC). The cysteines at positions 166 and 182 are disulfide-linked. Polar residues predominate over residues 201 to 210 (QFNSKSSQVA).

It belongs to the natriuretic peptide family. As to expression, expressed by the venom gland.

It localises to the secreted. Its function is as follows. Natriuretic peptide that dose-dependently induces the rapid relaxation of rat aortic strips phenylephrine-precontracted. Acts by stimulating cGMP production in a dose-dependent manner (by probably activating NPR1 and/or NPR2). May also show potent hypotensive effects. In Bungarus multicinctus (Many-banded krait), this protein is Natriuretic peptide BM026.